The following is a 165-amino-acid chain: Large ribosomal subunit protein uL10 (165 aa).

Belongs to the universal ribosomal protein uL10 family. In terms of assembly, part of the ribosomal stalk of the 50S ribosomal subunit. The N-terminus interacts with L11 and the large rRNA to form the base of the stalk. The C-terminus forms an elongated spine to which L12 dimers bind in a sequential fashion forming a multimeric L10(L12)X complex.

In terms of biological role, forms part of the ribosomal stalk, playing a central role in the interaction of the ribosome with GTP-bound translation factors. In Shewanella pealeana (strain ATCC 700345 / ANG-SQ1), this protein is Large ribosomal subunit protein uL10.